Consider the following 154-residue polypeptide: Protein AE7-like 1 (154 aa).

It belongs to the MIP18 family.

In terms of biological role, may play a role in chromosome segregation through establishment of sister chromatid cohesion. Unable to complement ae7 mutants, and thus probably not involved in the cytosolic iron-sulfur assembly (CIA) pathway. The protein is Protein AE7-like 1 of Arabidopsis thaliana (Mouse-ear cress).